The sequence spans 245 residues: MNFPYRNIVVLTGAGISAESGIQTFRAQDGLWENHRIEDVATPEGFARDPDLVQDFYNQRRKKLQDPNIEPNAAHLALGRLEAELDGQVTIVTQNIDNLHERGGNKNIIHMHGELLKSRCSVSNQVIEETGDILTGDLCHCCQMPSQMRPHVVWFGEMPLRMGEIYSALETADLFISIGTSGVVYPAAGFVHDAKMHGAHTIEINLEPSAIESEFVEKRYGKASVEVPKLVEELLAHLESNVENA.

Positions Met-1–His-237 constitute a Deacetylase sirtuin-type domain. NAD(+) is bound at residue Gly-13–Trp-32. Substrate contacts are provided by Tyr-57 and Arg-60. Residue Gln-94–Asp-97 participates in NAD(+) binding. Catalysis depends on His-112, which acts as the Proton acceptor. Residues Cys-120 and Cys-139 each coordinate Zn(2+). NAD(+)-binding positions include Gly-179–Ser-181, Asn-205–Glu-207, and Ala-223.

Belongs to the sirtuin family. Class III subfamily. It depends on Zn(2+) as a cofactor.

The protein resides in the cytoplasm. It carries out the reaction N(6)-acetyl-L-lysyl-[protein] + NAD(+) + H2O = 2''-O-acetyl-ADP-D-ribose + nicotinamide + L-lysyl-[protein]. It catalyses the reaction N(6)-succinyl-L-lysyl-[protein] + NAD(+) + H2O = 2''-O-succinyl-ADP-D-ribose + nicotinamide + L-lysyl-[protein]. In terms of biological role, NAD-dependent lysine deacetylase and desuccinylase that specifically removes acetyl and succinyl groups on target proteins. Modulates the activities of several proteins which are inactive in their acylated form. The protein is NAD-dependent protein deacylase of Vibrio vulnificus (strain YJ016).